Here is a 116-residue protein sequence, read N- to C-terminus: Cuticle protein AM1274 (116 aa).

Q1 carries the post-translational modification Pyrrolidone carboxylic acid. Residues 1–22 (QLANEPPIEIIRQESTDNGDGN) form a disordered region. Positions 20-85 (DGNFNFLFET…PVSDFIPTPH (66 aa)) constitute a Chitin-binding type R&amp;R domain. O-linked (HexNAc) threonine glycosylation is present at T83.

Arthrodial membrane.

This Cancer pagurus (Rock crab) protein is Cuticle protein AM1274.